Reading from the N-terminus, the 233-residue chain is Large ribosomal subunit protein uL1 (233 aa).

It belongs to the universal ribosomal protein uL1 family. As to quaternary structure, part of the 50S ribosomal subunit.

Its function is as follows. Binds directly to 23S rRNA. The L1 stalk is quite mobile in the ribosome, and is involved in E site tRNA release. In terms of biological role, protein L1 is also a translational repressor protein, it controls the translation of the L11 operon by binding to its mRNA. In Brucella canis (strain ATCC 23365 / NCTC 10854 / RM-666), this protein is Large ribosomal subunit protein uL1.